The sequence spans 294 residues: Acetyl-coenzyme A carboxylase carboxyl transferase subunit beta (294 aa).

One can recognise a CoA carboxyltransferase N-terminal domain in the interval 25 to 294; sequence VWTKCTSCEQ…PLVVPVDGSH (270 aa). Zn(2+) contacts are provided by cysteine 29, cysteine 32, cysteine 48, and cysteine 51. A C4-type zinc finger spans residues 29 to 51; that stretch reads CTSCEQVLYSAELERNLEVCPKC.

This sequence belongs to the AccD/PCCB family. As to quaternary structure, acetyl-CoA carboxylase is a heterohexamer composed of biotin carboxyl carrier protein (AccB), biotin carboxylase (AccC) and two subunits each of ACCase subunit alpha (AccA) and ACCase subunit beta (AccD). Requires Zn(2+) as cofactor.

The protein localises to the cytoplasm. The catalysed reaction is N(6)-carboxybiotinyl-L-lysyl-[protein] + acetyl-CoA = N(6)-biotinyl-L-lysyl-[protein] + malonyl-CoA. It functions in the pathway lipid metabolism; malonyl-CoA biosynthesis; malonyl-CoA from acetyl-CoA: step 1/1. Its function is as follows. Component of the acetyl coenzyme A carboxylase (ACC) complex. Biotin carboxylase (BC) catalyzes the carboxylation of biotin on its carrier protein (BCCP) and then the CO(2) group is transferred by the transcarboxylase to acetyl-CoA to form malonyl-CoA. This chain is Acetyl-coenzyme A carboxylase carboxyl transferase subunit beta, found in Aliivibrio fischeri (strain ATCC 700601 / ES114) (Vibrio fischeri).